Consider the following 209-residue polypeptide: Rac-like GTP-binding protein ARAC7 (209 aa).

13-20 (GDGAVGKT) contributes to the GTP binding site. The Effector region signature appears at 35–43 (YIPTVFDNF). Residues 60-64 (DTAGQ) and 118-121 (TKLD) each bind GTP. S-palmitoyl cysteine attachment occurs at residues Cys-196, Cys-203, and Cys-206.

It belongs to the small GTPase superfamily. Rho family. In terms of processing, although this sequence has a C-terminal -CXXX, it is palmitoylated at Cys-206, rather than prenylated.

The protein resides in the membrane. Functionally, acts as a negative regulator of abscisic acid (ABA) responses. In Arabidopsis thaliana (Mouse-ear cress), this protein is Rac-like GTP-binding protein ARAC7 (ARAC7).